Here is a 518-residue protein sequence, read N- to C-terminus: Ell-associated factor Eaf (518 aa).

Polar residues-rich tracts occupy residues 119–128 and 163–182; these read KTRSEMTNKP and ENST…SRRN. Disordered stretches follow at residues 119 to 216 and 241 to 518; these read KTRS…PAWH and ALHN…DDDD. At S192 the chain carries Phosphoserine. Composition is skewed to polar residues over residues 253 to 265 and 274 to 284; these read ANIS…SSVG and MGKQRQASSQG. The span at 289 to 342 shows a compositional bias: low complexity; that stretch reads QQQTQRSSPPMQQQQQQQNYGRGGANNNYAQQLHQQQQQQQQQQLQQQQQQMQQ. A compositionally biased stretch (polar residues) spans 343–355; the sequence is RASFSHSNHSNSM. Over residues 368–377 the composition is skewed to low complexity; it reads AAQSMAQAAA. Acidic residues predominate over residues 397–412; it reads ESSDSDSGSDSDDSTE. Composition is skewed to low complexity over residues 418 to 428, 463 to 476, and 500 to 518; these read HQQQQPPGQLS, QQQQ…QQQQ, and NDLL…DDDD.

It belongs to the EAF family.

The protein localises to the nucleus. Functionally, promotes transcriptional elongation by Su(Tpl)/ELL. Essential for development. The polypeptide is Ell-associated factor Eaf (Drosophila mojavensis (Fruit fly)).